Reading from the N-terminus, the 484-residue chain is EF-hand calcium-binding domain-containing protein 14 (484 aa).

Disordered stretches follow at residues 1-48 (MKKR…TDEE), 227-255 (GSME…HSES), and 313-395 (EQRT…FTSD). Residues 37–48 (PDSDSESSTDEE) show a composition bias toward acidic residues. 3 stretches are compositionally biased toward polar residues: residues 228–239 (SMENNGSNQILP), 315–324 (RTNVSSSTME), and 335–347 (LVTN…QAQS). 2 consecutive EF-hand domains span residues 423 to 452 (SSIK…WNSL) and 453 to 484 (GSAM…ALGI). Residues Asp466, Asn468, Asp470, Arg472, and Glu477 each contribute to the Ca(2+) site.

The sequence is that of EF-hand calcium-binding domain-containing protein 14 (Efcab14) from Mus musculus (Mouse).